The primary structure comprises 727 residues: Non-structural protein 4 (727 aa).

Disordered stretches follow at residues Met-1 to Gly-38 and Ser-673 to Lys-727. Residues Arg-17–Gly-38 show a composition bias toward polar residues. Basic residues predominate over residues Ser-712 to Lys-727.

The polypeptide is Non-structural protein 4 (Rice dwarf virus (isolate Akita) (RDV)).